A 76-amino-acid polypeptide reads, in one-letter code: Mating-type pheromone BBP1(1) (76 aa).

Cys73 bears the Cysteine methyl ester mark. Cys73 carries the S-farnesyl cysteine lipid modification. Positions 74–76 (VVA) are cleaved as a propeptide — removed in mature form.

It is found in the cell membrane. Its function is as follows. Activates B-regulated development. In Schizophyllum commune (Split gill fungus), this protein is Mating-type pheromone BBP1(1) (BBP1(1)).